Reading from the N-terminus, the 103-residue chain is Matrix Gla protein (103 aa).

A signal peptide spans 1 to 19 (MRSLLLLTVLAALVVAILC). 4-carboxyglutamate is present on Glu21. Phosphoserine occurs at positions 22, 25, and 28. A Gla domain is found at 51-97 (MAKAQERVREQRKPAYELNREACDDYKLCERYAMVYGYNAAYNRYFR). 4 positions are modified to 4-carboxyglutamate: Glu56, Glu60, Glu67, and Glu71. Cys73 and Cys79 form a disulfide bridge.

Belongs to the osteocalcin/matrix Gla protein family. Post-translationally, requires vitamin K-dependent gamma-carboxylation for its function.

The protein resides in the secreted. In terms of biological role, associates with the organic matrix of bone and cartilage. Thought to act as an inhibitor of bone formation. The chain is Matrix Gla protein (MGP) from Oryctolagus cuniculus (Rabbit).